A 658-amino-acid chain; its full sequence is NADPH-dependent diflavin oxidoreductase 1 (658 aa).

A Flavodoxin-like domain is found at 16–160; it reads LTILYMTQTG…ELGPWMNRFW (145 aa). FMN-binding positions include 22 to 27, 69 to 72, 107 to 116, and D142; these read TQTGTS, STTG, and LGDSTYPRFC. In terms of domain architecture, FAD-binding FR-type spans 215–502; sequence QGWSISILDK…IKPGYLTLPP (288 aa). FAD-binding positions include R400, 430-433, and 474-477; these read REFS and GLCT. NADP(+) is bound by residues T514, 574-575, and 580-584; these read SR and KTYVQ. W657 serves as a coordination point for FAD.

It belongs to the NADPH-dependent diflavin oxidoreductase NDOR1 family. This sequence in the N-terminal section; belongs to the flavodoxin family. In the C-terminal section; belongs to the flavoprotein pyridine nucleotide cytochrome reductase family. As to quaternary structure, interacts with DRE2; as part of the cytosolic iron-sulfur (Fe-S) protein assembly (CIA) machinery. FAD serves as cofactor. Requires FMN as cofactor.

The protein resides in the cytoplasm. It localises to the mitochondrion. It catalyses the reaction 2 oxidized [2Fe-2S]-[protein] + NADPH = 2 reduced [2Fe-2S]-[protein] + NADP(+) + H(+). Functionally, NADPH-dependent reductase which is a central component of the cytosolic iron-sulfur (Fe-S) protein assembly (CIA) machinery. Transfers electrons from NADPH via its FAD and FMN prosthetic groups to the [2Fe-2S] cluster of DRE2, another key component of the CIA machinery. In turn, this reduced cluster provides electrons for assembly of cytosolic iron-sulfur cluster proteins. Positively controls H(2)O(2)-induced cell death. This Mycosarcoma maydis (Corn smut fungus) protein is NADPH-dependent diflavin oxidoreductase 1.